The following is a 179-amino-acid chain: Large ribosomal subunit protein uL5 (179 aa).

The protein belongs to the universal ribosomal protein uL5 family. As to quaternary structure, part of the 50S ribosomal subunit; part of the 5S rRNA/L5/L18/L25 subcomplex. Contacts the 5S rRNA and the P site tRNA. Forms a bridge to the 30S subunit in the 70S ribosome.

Its function is as follows. This is one of the proteins that bind and probably mediate the attachment of the 5S RNA into the large ribosomal subunit, where it forms part of the central protuberance. In the 70S ribosome it contacts protein S13 of the 30S subunit (bridge B1b), connecting the 2 subunits; this bridge is implicated in subunit movement. Contacts the P site tRNA; the 5S rRNA and some of its associated proteins might help stabilize positioning of ribosome-bound tRNAs. The chain is Large ribosomal subunit protein uL5 from Halorhodospira halophila (strain DSM 244 / SL1) (Ectothiorhodospira halophila (strain DSM 244 / SL1)).